A 68-amino-acid polypeptide reads, in one-letter code: Large ribosomal subunit protein bL31 (68 aa).

Residues C16, C18, C36, and C39 each coordinate Zn(2+).

Belongs to the bacterial ribosomal protein bL31 family. Type A subfamily. As to quaternary structure, part of the 50S ribosomal subunit. The cofactor is Zn(2+).

Its function is as follows. Binds the 23S rRNA. This chain is Large ribosomal subunit protein bL31, found in Sorangium cellulosum (strain So ce56) (Polyangium cellulosum (strain So ce56)).